The following is a 132-amino-acid chain: Replication enhancer protein (132 aa).

Belongs to the geminiviridae replication enhancer protein family. As to quaternary structure, homooligomer. Interacts with the replication-associated protein (REP). Interacts with host proliferating cell nuclear antigen (PCNA). Interacts with host retinoblastoma-related protein 1 (RBR1), and may thereby deregulate the host cell cycle. Oligomerization and interaction with PCNA are necessary for optimal replication enhancement.

Its function is as follows. Increases viral DNA accumulation. Enhances infectivity and symptom expression. The protein is Replication enhancer protein of Abutilon (Upland cotton).